Consider the following 154-residue polypeptide: Myoglobin (154 aa).

Residues 2–148 (GLSDGEWQLV…FRNDIAAKYK (147 aa)) form the Globin domain. Residue serine 4 is modified to Phosphoserine. A nitrite-binding site is contributed by histidine 65. Position 65 (histidine 65) interacts with O2. Phosphothreonine occurs at positions 68 and 75. Residue histidine 94 participates in heme b binding. At serine 121 the chain carries Phosphoserine.

The protein belongs to the globin family. In terms of assembly, monomeric.

Its subcellular location is the cytoplasm. It is found in the sarcoplasm. The enzyme catalyses Fe(III)-heme b-[protein] + nitric oxide + H2O = Fe(II)-heme b-[protein] + nitrite + 2 H(+). It carries out the reaction H2O2 + AH2 = A + 2 H2O. Functionally, monomeric heme protein which primary function is to store oxygen and facilitate its diffusion within muscle tissues. Reversibly binds oxygen through a pentacoordinated heme iron and enables its timely and efficient release as needed during periods of heightened demand. Depending on the oxidative conditions of tissues and cells, and in addition to its ability to bind oxygen, it also has a nitrite reductase activity whereby it regulates the production of bioactive nitric oxide. Under stress conditions, like hypoxia and anoxia, it also protects cells against reactive oxygen species thanks to its pseudoperoxidase activity. The chain is Myoglobin from Mus musculus (Mouse).